A 187-amino-acid polypeptide reads, in one-letter code: Photosystem I assembly protein Ycf4 (187 aa).

2 helical membrane-spanning segments follow: residues 21-43 (LSNY…AGIS) and 69-91 (LLYG…WNVG).

This sequence belongs to the Ycf4 family.

It localises to the plastid. Its subcellular location is the cyanelle thylakoid membrane. Seems to be required for the assembly of the photosystem I complex. The polypeptide is Photosystem I assembly protein Ycf4 (Cyanophora paradoxa).